The following is a 778-amino-acid chain: uncharacterized protein (778 aa).

The PE domain occupies 1–92 (MSFVIAVPEA…GARSYVVAEA (92 aa)). 3 disordered regions span residues 125–163 (ADGT…AGLI), 372–510 (TGLA…GDAF), and 718–778 (QGGL…GADG). Gly residues-rich tracts occupy residues 402–429 (NQTG…GGLG), 436–510 (DGTG…GDAF), and 718–763 (QGGL…GSSG).

It belongs to the mycobacterial PE family. PGRS subfamily.

This is an uncharacterized protein from Mycobacterium bovis (strain ATCC BAA-935 / AF2122/97).